Here is a 121-residue protein sequence, read N- to C-terminus: Neuromedin-B (121 aa).

An N-terminal signal peptide occupies residues 1–24 (MTLRARGARLLGGLLFFTLLAAGA). Met56 carries the post-translational modification Methionine amide. Positions 60–121 (SLEPPNPSLL…RRLLVQTLEK (62 aa)) are excised as a propeptide.

Belongs to the bombesin/neuromedin-B/ranatensin family. In terms of tissue distribution, higher expression in the central nervous system (CNS) than in peripheral tissues. Highest levels are found in the olfactory bulb. Relatively high levels in the CNS (including the cerebral cortex, cerebellum, spinal cord, medulla oblongata, midbrain, hypothalamus, hippocampus, and hypophysis) and in peripheral tissues such as the pancreas, adrenal gland, testis, ovary and cecum. Moderate levels are found in the rectum, heart and pons with low expression levels detected in the bone marrow and duodenum. Other tissues show no or low levels of expression.

It is found in the secreted. The protein resides in the cell projection. It localises to the neuron projection. Functionally, stimulates smooth muscle contraction. Induces sighing by acting directly on the pre-Botzinger complex, a cluster of several thousand neurons in the ventrolateral medulla responsible for inspiration during respiratory activity. Contributes to the induction of sneezing following exposure to chemical irritants or allergens which causes release of NMB by nasal sensory neurons and activation of NMBR-expressing neurons in the sneeze-evoking region of the brainstem. These in turn activate neurons of the caudal ventral respiratory group, giving rise to the sneezing response. Contributes to induction of acute itch, possibly through activation of the NMBR receptor on dorsal root ganglion neurons. Increases expression of NMBR and steroidogenic mediators STAR, CYP11A1 and HSD3B1 in Leydig cells, induces secretion of testosterone by Leydig cells and also promotes Leydig cell proliferation. Plays a role in the innate immune response to influenza A virus infection by enhancing interferon alpha expression and reducing expression of IL6. Plays a role in CSF1-induced proliferation of osteoclast precursors by contributing to positive regulation of the expression of the CSF1 receptor CSF1R. The chain is Neuromedin-B (NMB) from Sus scrofa (Pig).